Reading from the N-terminus, the 211-residue chain is Bcl-2 homologous antagonist/killer (211 aa).

A disordered region spans residues 1-28 (MASGQGPGPPRQECGEPALPSASEEQVA). Residue Ala2 is modified to N-acetylalanine. The BH3 signature appears at 74–88 (VGRQLAIIGDDINRR). Residues 117–136 (SLFESGINWGRVVALLGFGY) carry the BH1 motif. Residues Asp160 and His164 each contribute to the Zn(2+) site. The BH2 signature appears at 169–184 (RWIAQRGGWVAALNLG). Residues 188–205 (ILNVLVVLGVVLLGQFVV) traverse the membrane as a helical segment.

Belongs to the Bcl-2 family. In terms of assembly, homodimer. Formation of the homodimer is zinc-dependent. Forms heterodimers with BCL2 and BCL2L1 isoform Bcl-X(L). Forms heterooligomers with BAX. Interacts with BCL2A1. Interacts with RTL10/BOP. Interacts with VDAC1. Interacts with GIMAP3/IAN4 and GIMAP5/IAN5. (Microbial infection) Interacts with vaccinia virus protein F1. As to quaternary structure, (Microbial infection) Interacts with myxoma virus protein M11L. In terms of assembly, (Microbial infection) Interacts with Epstein-Barr virus protein BALF1. (Microbial infection) Interacts with adenovirus protein E1B 19K. Expressed in a wide variety of tissues, with highest levels in the heart and skeletal muscle.

The protein resides in the mitochondrion outer membrane. Functionally, plays a role in the mitochondrial apoptotic process. Upon arrival of cell death signals, promotes mitochondrial outer membrane (MOM) permeabilization by oligomerizing to form pores within the MOM. This releases apoptogenic factors into the cytosol, including cytochrome c, promoting the activation of caspase 9 which in turn processes and activates the effector caspases. This Homo sapiens (Human) protein is Bcl-2 homologous antagonist/killer (BAK1).